The chain runs to 351 residues: Methionine import ATP-binding protein MetN (351 aa).

Positions 2–247 (ITTSGLTKVY…PGSELAAALF (246 aa)) constitute an ABC transporter domain. Residue 38-45 (GQSGAGKS) coordinates ATP.

It belongs to the ABC transporter superfamily. Methionine importer (TC 3.A.1.24) family. In terms of assembly, the complex is composed of two ATP-binding proteins (MetN), two transmembrane proteins (MetI) and a solute-binding protein (MetQ).

It localises to the cell membrane. The catalysed reaction is L-methionine(out) + ATP + H2O = L-methionine(in) + ADP + phosphate + H(+). It catalyses the reaction D-methionine(out) + ATP + H2O = D-methionine(in) + ADP + phosphate + H(+). Its function is as follows. Part of the ABC transporter complex MetNIQ involved in methionine import. Responsible for energy coupling to the transport system. The sequence is that of Methionine import ATP-binding protein MetN from Streptomyces coelicolor (strain ATCC BAA-471 / A3(2) / M145).